We begin with the raw amino-acid sequence, 1201 residues long: uncharacterized protein (1201 aa).

Residues 140-160 (IIINLIFFFAFIIVGIYLFKP) form a helical membrane-spanning segment. Coiled coils occupy residues 420-459 (QKKQ…AELN) and 536-574 (AIKA…ITKM).

It is found in the cell membrane. This is an uncharacterized protein from Bacillus subtilis (strain 168).